Here is a 136-residue protein sequence, read N- to C-terminus: Nucleoside diphosphate kinase (136 aa).

ATP is bound by residues Lys-10, Phe-58, Arg-86, Thr-92, Arg-104, and Asn-114. The active-site Pros-phosphohistidine intermediate is the His-117.

This sequence belongs to the NDK family. As to quaternary structure, homotetramer. It depends on Mg(2+) as a cofactor.

Its subcellular location is the cytoplasm. It catalyses the reaction a 2'-deoxyribonucleoside 5'-diphosphate + ATP = a 2'-deoxyribonucleoside 5'-triphosphate + ADP. The catalysed reaction is a ribonucleoside 5'-diphosphate + ATP = a ribonucleoside 5'-triphosphate + ADP. In terms of biological role, major role in the synthesis of nucleoside triphosphates other than ATP. The ATP gamma phosphate is transferred to the NDP beta phosphate via a ping-pong mechanism, using a phosphorylated active-site intermediate. In Corynebacterium efficiens (strain DSM 44549 / YS-314 / AJ 12310 / JCM 11189 / NBRC 100395), this protein is Nucleoside diphosphate kinase.